Reading from the N-terminus, the 165-residue chain is Endoribonuclease YbeY (165 aa).

Residues H130, H134, and H140 each contribute to the Zn(2+) site.

It belongs to the endoribonuclease YbeY family. Zn(2+) serves as cofactor.

Its subcellular location is the cytoplasm. In terms of biological role, single strand-specific metallo-endoribonuclease involved in late-stage 70S ribosome quality control and in maturation of the 3' terminus of the 16S rRNA. The chain is Endoribonuclease YbeY from Streptococcus gordonii (strain Challis / ATCC 35105 / BCRC 15272 / CH1 / DL1 / V288).